The chain runs to 147 residues: uncharacterized protein (147 aa).

The helical transmembrane segment at 69–89 (IFFFLSLYLSSIKIPMLILNI) threads the bilayer.

The protein localises to the membrane. This is an uncharacterized protein from Saccharomyces cerevisiae (strain ATCC 204508 / S288c) (Baker's yeast).